The sequence spans 876 residues: Leucine--tRNA ligase (876 aa).

Positions 43–53 match the 'HIGH' region motif; the sequence is PYPSGRIHMGH. The short motif at 632–636 is the 'KMSKS' region element; the sequence is KMSKS. Lysine 635 contacts ATP.

It belongs to the class-I aminoacyl-tRNA synthetase family.

The protein localises to the cytoplasm. The enzyme catalyses tRNA(Leu) + L-leucine + ATP = L-leucyl-tRNA(Leu) + AMP + diphosphate. This chain is Leucine--tRNA ligase, found in Sinorhizobium medicae (strain WSM419) (Ensifer medicae).